The sequence spans 243 residues: Venom nerve growth factor 3 (243 aa).

An N-terminal signal peptide occupies residues 1–18 (MSMLCYTLIIAFLIGIWA). Residues 19-125 (APKSEDNVPL…ALNRNIRAKR (107 aa)) constitute a propeptide that is removed on maturation. Over residues 47-66 (GLKTSRNTDQRHPAPKKAED) the composition is skewed to basic and acidic residues. Residues 47–67 (GLKTSRNTDQRHPAPKKAEDQ) are disordered. Cystine bridges form between Cys-139/Cys-204, Cys-182/Cys-232, and Cys-192/Cys-234. Asn-148 and Asn-151 each carry an N-linked (GlcNAc...) asparagine glycan.

Belongs to the NGF-beta family. Homodimer; non-covalently linked. In terms of tissue distribution, expressed by the venom gland.

Its subcellular location is the secreted. Its function is as follows. Nerve growth factor is important for the development and maintenance of the sympathetic and sensory nervous systems. It stimulates division and differentiation of sympathetic and embryonic sensory neurons as well as basal forebrain cholinergic neurons in the brain. Its relevance in the snake venom is not clear. However, it has been shown to inhibit metalloproteinase-dependent proteolysis of platelet glycoprotein Ib alpha, suggesting a metalloproteinase inhibition to prevent metalloprotease autodigestion and/or protection against prey proteases. Binds a lipid between the two protein chains in the homodimer. The lipid-bound form promotes histamine relase from mouse mast cells, contrary to the lipid-free form. The sequence is that of Venom nerve growth factor 3 from Tropidechis carinatus (Australian rough-scaled snake).